The following is a 324-amino-acid chain: Pyruvate synthase subunit PorB (324 aa).

3 residues coordinate [4Fe-4S] cluster: Cys-26, Cys-29, and Cys-57. The tract at residues 150-172 (TGNQRSGSTPPGSDTTTAPVGKK) is disordered. The span at 155–166 (SGSTPPGSDTTT) shows a compositional bias: low complexity. A [4Fe-4S] cluster-binding site is contributed by Cys-228.

Heterotetramer of one alpha, one beta, one delta and one gamma chain. [4Fe-4S] cluster is required as a cofactor.

It carries out the reaction 2 oxidized [2Fe-2S]-[ferredoxin] + pyruvate + CoA = 2 reduced [2Fe-2S]-[ferredoxin] + acetyl-CoA + CO2 + H(+). In Thermotoga maritima (strain ATCC 43589 / DSM 3109 / JCM 10099 / NBRC 100826 / MSB8), this protein is Pyruvate synthase subunit PorB (porB).